Consider the following 706-residue polypeptide: Zinc finger and BTB domain-containing protein 17 (706 aa).

Positions 1 to 12 (LKSLTVLAESPV) constitute a BTB domain. Positions 32–194 (TAARVTQGDS…LLRSGTYSDR (163 aa)) are disordered. The segment covering 67–78 (EPAEQPDAKEGP) has biased composition (basic and acidic residues). Over residues 90 to 106 (AAEASPAAVSPSRPQPA) the composition is skewed to low complexity. Over residues 134-148 (GKEEEGEAMVEDEEE) the composition is skewed to acidic residues. The segment covering 170 to 182 (SGSTDSGQENSGE) has biased composition (polar residues). C2H2-type zinc fingers lie at residues 205-227 (HKCE…IRIH), 233-255 (FSCR…EKTH), 261-283 (YGCE…KKRH), 289-311 (YRCD…QLVH), 317-339 (YQCD…LETH), 345-367 (HKCP…LKIH), 373-395 (LKCR…LRIH), 401-423 (YVCV…VPIH), 427-450 (KPCQ…HVRH), 457-479 (YVCE…IRHH), 485-507 (HKCT…IIIH), 513-536 (FLCD…KTVH), and 618-640 (YACD…VRIH). The segment at 680-706 (PRDSPQEAPAAPLAPVPLAGEGQAPAE) is disordered. The span at 687-698 (APAAPLAPVPLA) shows a compositional bias: low complexity.

The protein belongs to the krueppel C2H2-type zinc-finger protein family.

Its subcellular location is the nucleus. Functionally, transcription factor that can function as an activator or repressor depending on its binding partners, and by targeting negative regulators of cell cycle progression. Plays a critical role in early lymphocyte development, where it is essential to prevent apoptosis in lymphoid precursors, allowing them to survive in response to IL7 and undergo proper lineage commitment. Has been shown to bind to the promoters of adenovirus major late protein and cyclin D1 and activate transcription. Required for early embryonic development during gastrulation. Represses RB1 transcription. The sequence is that of Zinc finger and BTB domain-containing protein 17 (ZBTB17) from Gallus gallus (Chicken).